The sequence spans 156 residues: Protein BUNDLE SHEATH DEFECTIVE 2, chloroplastic (156 aa).

Residues Met1–Glu41 constitute a chloroplast transit peptide. Residues Cys78, Cys81, Cys89, Cys92, Cys133, Cys136, Cys144, and Cys147 each contribute to the Zn(2+) site.

It belongs to the BSD2 chaperone family. As to quaternary structure, interacts with the RuBisCo large subunit (RbcL) assembled as an intermediate complex made of eight RbcL and eight BSD2 subunits.

It is found in the plastid. Its subcellular location is the chloroplast stroma. Chloroplast chaperone required for RuBisCo biogenesis and translational regulation of the RuBisCo large subunit (RbcL). Stabilizes an end-state assembly intermediate of eight RbcL subunits until the small subunits (RBCSs) become available to produce a complete stable RuBisCo complex containing eight small and eight large subunits. This is Protein BUNDLE SHEATH DEFECTIVE 2, chloroplastic from Chlamydomonas reinhardtii (Chlamydomonas smithii).